The primary structure comprises 471 residues: Glutamate--tRNA ligase 1 (471 aa).

The short motif at 15–25 is the 'HIGH' region element; sequence PSPTGYLHIGG. Positions 243-247 match the 'KMSKS' region motif; that stretch reads KLSKR. Lys-246 contacts ATP.

Belongs to the class-I aminoacyl-tRNA synthetase family. Glutamate--tRNA ligase type 1 subfamily. In terms of assembly, monomer.

It localises to the cytoplasm. It carries out the reaction tRNA(Glu) + L-glutamate + ATP = L-glutamyl-tRNA(Glu) + AMP + diphosphate. In terms of biological role, catalyzes the attachment of glutamate to tRNA(Glu) in a two-step reaction: glutamate is first activated by ATP to form Glu-AMP and then transferred to the acceptor end of tRNA(Glu). In Cereibacter sphaeroides (strain ATCC 17023 / DSM 158 / JCM 6121 / CCUG 31486 / LMG 2827 / NBRC 12203 / NCIMB 8253 / ATH 2.4.1.) (Rhodobacter sphaeroides), this protein is Glutamate--tRNA ligase 1.